The chain runs to 404 residues: Biflaviolin synthase CYP158A2 (404 aa).

Residues Arg-288 and Leu-293 each coordinate flaviolin. Cys-353 contributes to the heme binding site.

Belongs to the cytochrome P450 family. Heme serves as cofactor.

The catalysed reaction is 2 flaviolin + 2 reduced [2Fe-2S]-[ferredoxin] + O2 + H(+) = 3,3'-biflaviolin + 2 oxidized [2Fe-2S]-[ferredoxin] + 2 H2O. It carries out the reaction 2 flaviolin + 2 reduced [2Fe-2S]-[ferredoxin] + O2 + H(+) = 3,8'-biflaviolin + 2 oxidized [2Fe-2S]-[ferredoxin] + 2 H2O. It functions in the pathway pigment biosynthesis. Its function is as follows. Catalyzes oxidative C-C coupling reaction to polymerize flaviolin and form highly conjugated pigments which protect the soil bacterium from deleterious effects of UV irradiation (three isomers of biflaviolin and one triflaviolin). The protein is Biflaviolin synthase CYP158A2 of Streptomyces coelicolor (strain ATCC BAA-471 / A3(2) / M145).